We begin with the raw amino-acid sequence, 276 residues long: Octanoyltransferase LipM (276 aa).

A BPL/LPL catalytic domain is found at 31–246; that stretch reads GLIPPTIRFY…GFEKGLSIKL (216 aa). The active-site Acyl-thioester intermediate is the Cys148.

Belongs to the octanoyltransferase LipM family. Monomer.

The catalysed reaction is octanoyl-[ACP] + L-lysyl-[protein] = N(6)-octanoyl-L-lysyl-[protein] + holo-[ACP] + H(+). Its pathway is protein modification; protein lipoylation via endogenous pathway; protein N(6)-(lipoyl)lysine from octanoyl-[acyl-carrier-protein]. Functionally, catalyzes the transfer of endogenously produced octanoic acid from octanoyl-acyl-carrier-protein onto the lipoyl domain of GcvH, an intermediate carrier during protein lipoylation. The sequence is that of Octanoyltransferase LipM from Halalkalibacterium halodurans (strain ATCC BAA-125 / DSM 18197 / FERM 7344 / JCM 9153 / C-125) (Bacillus halodurans).